A 371-amino-acid polypeptide reads, in one-letter code: 4-hydroxy-3-methylbut-2-en-1-yl diphosphate synthase (flavodoxin) (371 aa).

The [4Fe-4S] cluster site is built by Cys-272, Cys-275, Cys-307, and Glu-314.

Belongs to the IspG family. Requires [4Fe-4S] cluster as cofactor.

The catalysed reaction is (2E)-4-hydroxy-3-methylbut-2-enyl diphosphate + oxidized [flavodoxin] + H2O + 2 H(+) = 2-C-methyl-D-erythritol 2,4-cyclic diphosphate + reduced [flavodoxin]. The protein operates within isoprenoid biosynthesis; isopentenyl diphosphate biosynthesis via DXP pathway; isopentenyl diphosphate from 1-deoxy-D-xylulose 5-phosphate: step 5/6. Functionally, converts 2C-methyl-D-erythritol 2,4-cyclodiphosphate (ME-2,4cPP) into 1-hydroxy-2-methyl-2-(E)-butenyl 4-diphosphate. The chain is 4-hydroxy-3-methylbut-2-en-1-yl diphosphate synthase (flavodoxin) from Pseudomonas paraeruginosa (strain DSM 24068 / PA7) (Pseudomonas aeruginosa (strain PA7)).